Reading from the N-terminus, the 415-residue chain is MATH domain and coiled-coil domain-containing protein At2g42465 (415 aa).

The region spanning 6 to 130 is the MATH domain; sequence RKALTLTVTN…NDRFNIEIYI (125 aa). Residues 244 to 341 are a coiled coil; that stretch reads FKLEWLKAKL…LLKDTYSDLK (98 aa).

This Arabidopsis thaliana (Mouse-ear cress) protein is MATH domain and coiled-coil domain-containing protein At2g42465.